Here is a 778-residue protein sequence, read N- to C-terminus: Hyaluronate lyase (778 aa).

The tat-type signal signal peptide spans 1–33; the sequence is MSWNRRSFLGALGVTCLAGAGMVPIVRPRTAAA. Residues Asn200, His250, and Tyr259 contribute to the active site.

The protein belongs to the polysaccharide lyase 8 family. In terms of processing, predicted to be exported by the Tat system. The position of the signal peptide cleavage has not been experimentally proven.

The catalysed reaction is [hyaluronan](n) = n 3-(4-deoxy-beta-D-gluc-4-enuronosyl)-N-acetyl-D-glucosamine + H2O. Its activity is regulated as follows. Is salt-dependent and is active over a wide range of NaCl concentrations. Activity is slightly promoted by Ni(2+), and inhibited by most of the tested metal ions, including Li(+), K(+), Ba(2+), Mg(2+), Zn(2+), Ca(2+), Mn(2+) and Al(3+). Degrades hyaluronic acid into unsaturated disaccharides as the end products. Exhibits very low activity against various types of chondroitin sulfate variants. The sequence is that of Hyaluronate lyase from Thermasporomyces composti.